We begin with the raw amino-acid sequence, 177 residues long: Large ribosomal subunit protein eL20 (177 aa).

Belongs to the eukaryotic ribosomal protein eL20 family.

This is Large ribosomal subunit protein eL20 (RpL18A) from Drosophila melanogaster (Fruit fly).